The chain runs to 313 residues: UPF0761 membrane protein VV0203 (313 aa).

6 helical membrane passes run 41–61 (YLAY…LSIL), 104–124 (MTAV…SNID), 139–159 (AVFS…LVGA), 185–205 (LLRW…YLLV), 215–235 (AVVG…GFAA), and 249–269 (ALAA…IVLI). The segment at 293-313 (LPNNDTELEKDTQRDRFDSES) is disordered. Positions 299 to 313 (ELEKDTQRDRFDSES) are enriched in basic and acidic residues.

The protein belongs to the UPF0761 family.

It is found in the cell inner membrane. In Vibrio vulnificus (strain YJ016), this protein is UPF0761 membrane protein VV0203.